The chain runs to 208 residues: Putative proteasome subunit alpha type-4-B (208 aa).

The protein belongs to the peptidase T1A family. In terms of assembly, component of the 20S core complex of the 26S proteasome. The 26S proteasome is composed of a core protease (CP), known as the 20S proteasome, capped at one or both ends by the 19S regulatory particle (RP/PA700). The 20S proteasome core is composed of 28 subunits that are arranged in four stacked rings, resulting in a barrel-shaped structure. The two end rings are each formed by seven alpha subunits, and the two central rings are each formed by seven beta subunits. The catalytic chamber with the active sites is on the inside of the barrel.

The protein resides in the cytoplasm. It localises to the nucleus. Functionally, the proteasome is a multicatalytic proteinase complex which is characterized by its ability to cleave peptides with Arg, Phe, Tyr, Leu, and Glu adjacent to the leaving group at neutral or slightly basic pH. The proteasome has an ATP-dependent proteolytic activity. The sequence is that of Putative proteasome subunit alpha type-4-B (PAC2) from Arabidopsis thaliana (Mouse-ear cress).